The sequence spans 345 residues: S-adenosylmethionine:tRNA ribosyltransferase-isomerase (345 aa).

The protein belongs to the QueA family. As to quaternary structure, monomer.

Its subcellular location is the cytoplasm. The catalysed reaction is 7-aminomethyl-7-carbaguanosine(34) in tRNA + S-adenosyl-L-methionine = epoxyqueuosine(34) in tRNA + adenine + L-methionine + 2 H(+). It functions in the pathway tRNA modification; tRNA-queuosine biosynthesis. Transfers and isomerizes the ribose moiety from AdoMet to the 7-aminomethyl group of 7-deazaguanine (preQ1-tRNA) to give epoxyqueuosine (oQ-tRNA). This Shewanella baltica (strain OS185) protein is S-adenosylmethionine:tRNA ribosyltransferase-isomerase.